A 240-amino-acid chain; its full sequence is Ubiquinone biosynthesis O-methyltransferase (240 aa).

Positions 44, 64, 85, and 129 each coordinate S-adenosyl-L-methionine.

It belongs to the methyltransferase superfamily. UbiG/COQ3 family.

It carries out the reaction a 3-demethylubiquinol + S-adenosyl-L-methionine = a ubiquinol + S-adenosyl-L-homocysteine + H(+). The enzyme catalyses a 3-(all-trans-polyprenyl)benzene-1,2-diol + S-adenosyl-L-methionine = a 2-methoxy-6-(all-trans-polyprenyl)phenol + S-adenosyl-L-homocysteine + H(+). It functions in the pathway cofactor biosynthesis; ubiquinone biosynthesis. O-methyltransferase that catalyzes the 2 O-methylation steps in the ubiquinone biosynthetic pathway. The sequence is that of Ubiquinone biosynthesis O-methyltransferase from Escherichia coli (strain K12 / MC4100 / BW2952).